Here is a 295-residue protein sequence, read N- to C-terminus: Glycine--tRNA ligase alpha subunit (295 aa).

The protein belongs to the class-II aminoacyl-tRNA synthetase family. As to quaternary structure, tetramer of two alpha and two beta subunits.

The protein localises to the cytoplasm. It carries out the reaction tRNA(Gly) + glycine + ATP = glycyl-tRNA(Gly) + AMP + diphosphate. The sequence is that of Glycine--tRNA ligase alpha subunit from Rhodospirillum rubrum (strain ATCC 11170 / ATH 1.1.1 / DSM 467 / LMG 4362 / NCIMB 8255 / S1).